The sequence spans 702 residues: Archaeal Lon protease (702 aa).

Residues 1–63 (MSNESTNDAP…VGVEGDVSID (63 aa)) are disordered. Topologically, residues 1–183 (MSNESTNDAP…EARKRNQMRS (183 aa)) are cytoplasmic. Positions 10–48 (PPDDDPDDPEPSVDHDDTDGLQDDPADSVDDAGEVDDLE) are enriched in acidic residues. An ATP-binding site is contributed by 117 to 124 (GSPGTGKS). Residues 184–201 (FLMWIMILLAVGYALLIA) form a helical membrane-spanning segment. Residues 202–206 (TPARP) are Extracellular-facing. A helical transmembrane segment spans residues 207 to 223 (LLALLSAAGIYLLFRYT). Topologically, residues 224 to 702 (NRGSDAMVPK…GTTGGNPSPQ (479 aa)) are cytoplasmic. The 181-residue stretch at 487 to 667 (EEAVGRVNGL…SEVLDVALVG (181 aa)) folds into the Lon proteolytic domain. Residues serine 574 and lysine 617 contribute to the active site.

The protein belongs to the peptidase S16 family. Archaeal LonB subfamily. As to quaternary structure, homohexamer. Organized in a ring with a central cavity.

The protein localises to the cell membrane. ATP-dependent serine protease that mediates the selective degradation of mutant and abnormal proteins as well as certain short-lived regulatory proteins. Degrades polypeptides processively. This Halobacterium salinarum (strain ATCC 700922 / JCM 11081 / NRC-1) (Halobacterium halobium) protein is Archaeal Lon protease.